A 163-amino-acid polypeptide reads, in one-letter code: Putative defense protein 3 (163 aa).

Residues 1–18 (MMFAYIVAVVSALALTSA) form the signal peptide. In terms of domain architecture, Reelin spans 19-163 (YPTGAPSSTC…SAPVTVLSHK (145 aa)). A disulfide bridge connects residues cysteine 28 and cysteine 103.

Belongs to the insect defense protein family.

It is found in the secreted. May have antimicrobial activity. This Antheraea mylitta (Tasar silkworm) protein is Putative defense protein 3.